The following is an 891-amino-acid chain: MLKDILRKTTQSDLYRYENIVKKINDLERVMKPLTNEELRAKTLGFRKSIEDGQSIDNILPEAFGLVREASLRILGLRHYDVQLIGGCILHDSKIAEMKTGEGKTLVAILPAYLNALSGKSVHIVTVNEYLAKRDSLSVGRVLSFLGLSVGLILADMNREERQENYKCDVIYTTNSELGFDYLRDNLVGNPSEKVQNGFEFAIIDEVDSVLIDEARTPLIISRSLETLNNIYLTAKNVAQAFEINTHYEIDKRNRNVYLNESGSKLAEKLLGVSSIYKFETGTYILNAIKAKEFYTKDKDYLVMRNQITIVDEFTGRILKGRRWGDGLHQAIEAKEGVTVGSETMTMASITYQNFFLFYKKLSGMTGTALTEAKEFKKIYNLSVDCVPINKKVNRIDKEDVVYKSLYAKWKAVLYESLSIHEQGRPLLIGTSNVKNSEIVSGLLKEYNIKHSLLNAKPENAANESEIIAQAGRKGSVTIATNMAGRGTDILLGGNPDFLTKGELRYIFRSIVLSLDDMTVPKNELINNLKYKYVISEKNRLDVEELIDKLKSAYTVPEKNRIGVEELIENIDESFQPVDKFEILIQKLYEKTKERYVRECLAEKEEVIQLGGLHIIGTEKHDSRRIDNQLRGRAGRQGDPGSSKFFLSFEDRLIEIFTTGGLKNMIKELDLEDDQPVEGKIVSLSIESAQKRIEDKNYQVRKQLFNYDNVLNLQRKVIYDERDRFLSLTDFKGLILQYLEKLVDDVVAEMERSENQEDKSRGIVLFCKKFICLPYSIDPELLSNLSKEEIKIFLNDQVKISYELKEIELESLRVGLSQSLEYAFLLQSIDQVWKEQLTRMELLKESIGWRAYGQRDPLLEYQKEAYRIFAIQTRKIRHSASHLIMCSTSFA.

Residues glutamine 83, 101–105, and aspartate 489 each bind ATP; that span reads GEGKT.

This sequence belongs to the SecA family.

The protein resides in the plastid. The protein localises to the chloroplast stroma. Its subcellular location is the chloroplast thylakoid membrane. The enzyme catalyses ATP + H2O + cellular proteinSide 1 = ADP + phosphate + cellular proteinSide 2.. Has a central role in coupling the hydrolysis of ATP to the transfer of proteins across the thylakoid membrane. The chain is Protein translocase subunit SecA from Diacronema lutheri (Unicellular marine alga).